The sequence spans 558 residues: DALR anticodon-binding domain-containing protein 3 (558 aa).

The segment at 213–240 is disordered; that stretch reads KALENSAYRDRETEKGKRRSRGEEIEGE.

This is DALR anticodon-binding domain-containing protein 3 (dalrd3) from Danio rerio (Zebrafish).